The chain runs to 194 residues: Fibroblast growth factor 7 (194 aa).

The signal sequence occupies residues 1–31; sequence MRKWILTWILPSLLYRSCFHIICLVGTISLA. N45 carries N-linked (GlcNAc...) asparagine glycosylation.

This sequence belongs to the heparin-binding growth factors family. As to quaternary structure, interacts with FGFBP1. Interacts with FGFR2. Affinity between fibroblast growth factors (FGFs) and their receptors is increased by heparan sulfate glycosaminoglycans that function as coreceptors.

In terms of biological role, plays an important role in the regulation of embryonic development, cell proliferation and cell differentiation. Required for normal branching morphogenesis. Growth factor active on keratinocytes. Possible major paracrine effector of normal epithelial cell proliferation. The chain is Fibroblast growth factor 7 (FGF7) from Ovis aries (Sheep).